The sequence spans 264 residues: Potassium channel regulatory protein (264 aa).

Residues 5 to 74 enclose the BTB domain; it reads DLVTLNVGGR…LRNHELLLPS (70 aa).

In terms of assembly, can form homooligomers. Interacts with KCNA1 (via cytoplasmic N-terminal domain) and KCNA4.

The protein resides in the endoplasmic reticulum. In terms of biological role, inhibits potassium fluxes in cells. May regulate Kv1 family channel proteins by retaining a fraction of channels in endomembranes. This chain is Potassium channel regulatory protein (Kcnrg), found in Mus musculus (Mouse).